A 296-amino-acid polypeptide reads, in one-letter code: Cyclin-dependent kinase 1 (296 aa).

The Protein kinase domain occupies 5-288 (FQKLEKIGEG…AKNGLSHKYF (284 aa)). ATP-binding positions include 11–19 (IGEGTYGVV) and Lys-34. The Proton acceptor role is filled by Asp-130.

Belongs to the protein kinase superfamily. CMGC Ser/Thr protein kinase family. CDC2/CDKX subfamily.

The protein localises to the nucleus. It catalyses the reaction L-seryl-[protein] + ATP = O-phospho-L-seryl-[protein] + ADP + H(+). It carries out the reaction L-threonyl-[protein] + ATP = O-phospho-L-threonyl-[protein] + ADP + H(+). Cyclin-dependent kinase that acts as a master regulator of the mitotic and meiotic cell cycles. The sequence is that of Cyclin-dependent kinase 1 from Encephalitozoon cuniculi (strain GB-M1) (Microsporidian parasite).